A 274-amino-acid polypeptide reads, in one-letter code: GCN5-related N-acetyltransferase 7, chloroplastic (274 aa).

A chloroplast-targeting transit peptide spans 1-65; that stretch reads MAFLCSSLPS…STFVISESVS (65 aa). The region spanning 75–267 is the N-acetyltransferase domain; sequence LRVRTFNELN…QRLLLWLALP (193 aa). Acetyl-CoA is bound by residues 189–191, 197–202, 228–230, and tyrosine 235; these read VCV, RNGVGY, and NEA. The active-site Proton donor is tyrosine 235.

Belongs to the acetyltransferase family. GNAT subfamily. As to quaternary structure, oligomer. Post-translationally, autoacetylated. As to expression, expressed in green tissues.

The protein localises to the plastid. The protein resides in the chloroplast. The enzyme catalyses an N-terminal L-alpha-aminoacyl-[protein] + acetyl-CoA = N-terminal N(alpha)-acetyl-L-alpha-aminoacyl-[protein] + CoA + H(+). The catalysed reaction is L-lysyl-[protein] + acetyl-CoA = N(6)-acetyl-L-lysyl-[protein] + CoA + H(+). It catalyses the reaction N-terminal L-alanyl-[protein] + acetyl-CoA = N-terminal N(alpha)-acetyl-L-alanyl-[protein] + CoA + H(+). It carries out the reaction N-terminal L-seryl-[protein] + acetyl-CoA = N-terminal N(alpha)-acetyl-L-seryl-[protein] + CoA + H(+). The enzyme catalyses N-terminal L-threonyl-[protein] + acetyl-CoA = N-terminal N(alpha)-acetyl-L-threonyl-[protein] + CoA + H(+). The catalysed reaction is N-terminal L-methionyl-[protein] + acetyl-CoA = N-terminal N(alpha)-acetyl-L-methionyl-[protein] + CoA + H(+). It catalyses the reaction N-terminal L-prolyl-[protein] + acetyl-CoA = N-terminal N(alpha)-acetyl-L-prolyl-[protein] + CoA + H(+). It carries out the reaction N-terminal L-valyl-[protein] + acetyl-CoA = N-terminal N(alpha)-acetyl-L-valyl-[protein] + CoA + H(+). Functionally, protein acetyltransferase with dual specificity triggering both N-alpha-acetylation (NTA), with a large spectrum of modified N-termini, including methionine, alanine, serine, threonine and to a lower extent valine and proline as substrates, and epsilon-lysine acetylation (KA). In Arabidopsis thaliana (Mouse-ear cress), this protein is GCN5-related N-acetyltransferase 7, chloroplastic.